Consider the following 463-residue polypeptide: Phosphoglycerate transporter protein (463 aa).

The Cytoplasmic segment spans residues 1–29 (MLTILKTGQSAHKVPPEKVQATYGRYRIQ). 12 helical membrane passes run 30–50 (ALLS…NFTL), 59–79 (LDLS…AYGI), 106–126 (IVNV…LVVF), 127–147 (NGLF…NWFP), 160–180 (ISHN…FAIL), 188–208 (ASYI…LVLG), 267–287 (VFVY…LLTV), 297–317 (VAFL…GWLS), 326–346 (MPLA…YWKS), 349–369 (LLMV…PQFL), 391–411 (GFMS…VMVD), and 413–433 (LGWY…ILFC).

The protein belongs to the major facilitator superfamily. Organophosphate:Pi antiporter (OPA) (TC 2.A.1.4) family.

The protein localises to the cell inner membrane. The phosphoglycerate transporter protein is a part of the PGT transport system. It is the membrane bound transporter for phosphoglycerate into salmonella. In Salmonella typhimurium (strain LT2 / SGSC1412 / ATCC 700720), this protein is Phosphoglycerate transporter protein (pgtP).